Here is a 445-residue protein sequence, read N- to C-terminus: 6-phosphogluconate dehydrogenase, decarboxylating (445 aa).

NADP(+)-binding positions include 1-4 (AVMG), 22-24 (NRS), 63-65 (VKA), and Asn-91. Residues Asn-91 and 117–119 (SGG) contribute to the substrate site. The active-site Proton acceptor is the Lys-172. 175-176 (HN) serves as a coordination point for substrate. The Proton donor role is filled by Glu-179. Positions 180, 249, 276, 434, and 440 each coordinate substrate.

Belongs to the 6-phosphogluconate dehydrogenase family. In terms of assembly, homodimer.

The enzyme catalyses 6-phospho-D-gluconate + NADP(+) = D-ribulose 5-phosphate + CO2 + NADPH. Its pathway is carbohydrate degradation; pentose phosphate pathway; D-ribulose 5-phosphate from D-glucose 6-phosphate (oxidative stage): step 3/3. Catalyzes the oxidative decarboxylation of 6-phosphogluconate to ribulose 5-phosphate and CO(2), with concomitant reduction of NADP to NADPH. This Shigella boydii protein is 6-phosphogluconate dehydrogenase, decarboxylating (gnd).